A 310-amino-acid chain; its full sequence is Olfactory receptor 5AR1 (310 aa).

At 1–25 (MDKENHSVVTEFVFMGITQDPQLQI) the chain is on the extracellular side. Residue asparagine 5 is glycosylated (N-linked (GlcNAc...) asparagine). Residues 26–46 (IFFVVFLLVYLVNVIGNVGMI) form a helical membrane-spanning segment. Residues 47 to 54 (ILIITDSQ) are Cytoplasmic-facing. A helical membrane pass occupies residues 55 to 75 (LHTPMYFFLCNLSFVDLGYSS). The Extracellular portion of the chain corresponds to 76 to 99 (AIAPRMLADFLTKHKVISFSSCAT). Cysteine 97 and cysteine 189 are oxidised to a cystine. A helical transmembrane segment spans residues 100–120 (QFAFFVGFVDAECYVLAAMAY). Topologically, residues 121-133 (DRFVAICRPLHYS) are cytoplasmic. The helical transmembrane segment at 134-154 (TLMSKKVCLVLMLGSYFAGLV) threads the bilayer. Residues 155 to 196 (SLVAHTSLTFSLSYCGSNIINHFFCEIPPLLALSCSDTYISE) lie on the Extracellular side of the membrane. Residues 197 to 217 (ILLFSLCGFIEFSTILIIFIS) traverse the membrane as a helical segment. Residue cysteine 203 participates in Cu cation binding. Residues 218 to 237 (YAFILIAIIRIRSAEGRLKA) lie on the Cytoplasmic side of the membrane. The chain crosses the membrane as a helical span at residues 238–258 (FSTCGSHLTGVTLFYGTVMFM). Residues methionine 256 and arginine 261 each contribute to the Cu cation site. The Extracellular portion of the chain corresponds to 259–271 (YLRPTSSYSLDQD). Residues 272 to 292 (KWASVFYTIIIPMLNPLIYSL) form a helical membrane-spanning segment. The Cytoplasmic portion of the chain corresponds to 293–310 (RNKDVKAAFKKLIGKKPQ).

This sequence belongs to the G-protein coupled receptor 1 family.

The protein localises to the cell membrane. With respect to regulation, copper binding enhances receptor activity in response to odorant binding. In terms of biological role, olfactory receptor that is activated by the binding of organosulfur odorants with thioether groups such as (methylthio)methanethiol (MTMT). The activity of this receptor is mediated by G proteins which activate adenylyl cyclase. The polypeptide is Olfactory receptor 5AR1 (Mus musculus (Mouse)).